Reading from the N-terminus, the 395-residue chain is Elongation factor Tu (395 aa).

Residues Lys10–Thr204 form the tr-type G domain. The tract at residues Gly19–Thr26 is G1. Residue Gly19–Thr26 participates in GTP binding. Thr26 is a Mg(2+) binding site. Residues Gly60–Ala64 are G2. Residues Asp81–Gly84 form a G3 region. GTP contacts are provided by residues Asp81–His85 and Asn136–Asp139. The tract at residues Asn136–Asp139 is G4. Residues Ser174–Leu176 form a G5 region.

The protein belongs to the TRAFAC class translation factor GTPase superfamily. Classic translation factor GTPase family. EF-Tu/EF-1A subfamily. In terms of assembly, monomer.

Its subcellular location is the cytoplasm. It catalyses the reaction GTP + H2O = GDP + phosphate + H(+). Its function is as follows. GTP hydrolase that promotes the GTP-dependent binding of aminoacyl-tRNA to the A-site of ribosomes during protein biosynthesis. This Exiguobacterium sibiricum (strain DSM 17290 / CCUG 55495 / CIP 109462 / JCM 13490 / 255-15) protein is Elongation factor Tu.